We begin with the raw amino-acid sequence, 301 residues long: Oxygen-dependent coproporphyrinogen-III oxidase (301 aa).

Ser-90 contributes to the substrate binding site. A divalent metal cation contacts are provided by His-94 and His-104. The Proton donor role is filled by His-104. 106 to 108 (NVR) contributes to the substrate binding site. Positions 143 and 173 each coordinate a divalent metal cation. An important for dimerization region spans residues 238-273 (YVEFNLVWDRGTLFGLQSGGRTESILMSLPPVVKWR). 256–258 (GGR) contributes to the substrate binding site.

Belongs to the aerobic coproporphyrinogen-III oxidase family. In terms of assembly, homodimer. The cofactor is a divalent metal cation.

It is found in the cytoplasm. It carries out the reaction coproporphyrinogen III + O2 + 2 H(+) = protoporphyrinogen IX + 2 CO2 + 2 H2O. The protein operates within porphyrin-containing compound metabolism; protoporphyrin-IX biosynthesis; protoporphyrinogen-IX from coproporphyrinogen-III (O2 route): step 1/1. In terms of biological role, involved in the heme biosynthesis. Catalyzes the aerobic oxidative decarboxylation of propionate groups of rings A and B of coproporphyrinogen-III to yield the vinyl groups in protoporphyrinogen-IX. The polypeptide is Oxygen-dependent coproporphyrinogen-III oxidase (Nitrosomonas europaea (strain ATCC 19718 / CIP 103999 / KCTC 2705 / NBRC 14298)).